The chain runs to 396 residues: Septu protein PtuA (396 aa).

Functionally, component of antiviral defense system Septu type I, composed of PtuA and PtuB. Expression of Septu type I in B.subtilis (strain BEST7003) confers resistance to phages SBSphiC and SBSphiJ. May be an ATPase. The protein is Septu protein PtuA of Bacillus thuringiensis.